The primary structure comprises 132 residues: Small ribosomal subunit protein uS8 (132 aa).

The protein belongs to the universal ribosomal protein uS8 family. Part of the 30S ribosomal subunit. Contacts proteins S5 and S12.

Functionally, one of the primary rRNA binding proteins, it binds directly to 16S rRNA central domain where it helps coordinate assembly of the platform of the 30S subunit. The protein is Small ribosomal subunit protein uS8 of Syntrophotalea carbinolica (strain DSM 2380 / NBRC 103641 / GraBd1) (Pelobacter carbinolicus).